A 251-amino-acid chain; its full sequence is Ribonuclease PH (251 aa).

Phosphate is bound by residues Arg90 and 128–130 (GTR).

This sequence belongs to the RNase PH family. As to quaternary structure, homohexameric ring arranged as a trimer of dimers.

It catalyses the reaction tRNA(n+1) + phosphate = tRNA(n) + a ribonucleoside 5'-diphosphate. Functionally, phosphorolytic 3'-5' exoribonuclease that plays an important role in tRNA 3'-end maturation. Removes nucleotide residues following the 3'-CCA terminus of tRNAs; can also add nucleotides to the ends of RNA molecules by using nucleoside diphosphates as substrates, but this may not be physiologically important. Probably plays a role in initiation of 16S rRNA degradation (leading to ribosome degradation) during starvation. The chain is Ribonuclease PH from Leifsonia xyli subsp. xyli (strain CTCB07).